The following is a 337-amino-acid chain: Tryptophan--tRNA ligase (337 aa).

ATP contacts are provided by residues Q11 to T13 and G19 to N20. The short motif at P12–N20 is the 'HIGH' region element. D135 is an L-tryptophan binding site. ATP is bound by residues G147–D149, V190, and K199–S203. Positions K199–S203 match the 'KMSKS' region motif.

This sequence belongs to the class-I aminoacyl-tRNA synthetase family. As to quaternary structure, homodimer.

It localises to the cytoplasm. It carries out the reaction tRNA(Trp) + L-tryptophan + ATP = L-tryptophyl-tRNA(Trp) + AMP + diphosphate + H(+). Functionally, catalyzes the attachment of tryptophan to tRNA(Trp). The sequence is that of Tryptophan--tRNA ligase from Synechocystis sp. (strain ATCC 27184 / PCC 6803 / Kazusa).